Here is an 885-residue protein sequence, read N- to C-terminus: Protein kintoun (885 aa).

Disordered stretches follow at residues 208–235 (LSKN…ADAG), 371–390 (LSRE…PVED), 607–636 (ELQQ…ESAC), 644–663 (EHHE…QRSY), 781–806 (RRLS…QPAH), and 819–871 (NNNH…MMFE). Positions 213-232 (TAEEKEPHPLEHMYPKKPEA) are enriched in basic and acidic residues. Ser-376 bears the Phosphoserine mark. The segment covering 612–629 (HHQKKLNKKQRKRNKKQR) has biased composition (basic residues). A Phosphoserine modification is found at Ser-784. The segment covering 824-837 (HVKDNKKQSLHDSG) has biased composition (basic and acidic residues). Positions 842-855 (NGSINNKNNHSNEN) are enriched in low complexity.

It belongs to the PIH1 family. Kintoun subfamily. As to quaternary structure, interacts with Pp1alpha-96A, Pp1-87B, Pp1-13C and flw.

It localises to the cytoplasm. Required for cytoplasmic pre-assembly of axonemal dyneins, thereby playing a central role in motility in cilia and flagella. Involved in pre-assembly of dynein arm complexes in the cytoplasm before intraflagellar transport loads them for the ciliary compartment. This chain is Protein kintoun, found in Drosophila mojavensis (Fruit fly).